Here is a 292-residue protein sequence, read N- to C-terminus: 4-hydroxy-tetrahydrodipicolinate synthase (292 aa).

Thr-45 lines the pyruvate pocket. The active-site Proton donor/acceptor is the Tyr-133. Residue Lys-161 is the Schiff-base intermediate with substrate of the active site. Ile-203 lines the pyruvate pocket.

Belongs to the DapA family. As to quaternary structure, homotetramer; dimer of dimers.

The protein resides in the cytoplasm. It carries out the reaction L-aspartate 4-semialdehyde + pyruvate = (2S,4S)-4-hydroxy-2,3,4,5-tetrahydrodipicolinate + H2O + H(+). The protein operates within amino-acid biosynthesis; L-lysine biosynthesis via DAP pathway; (S)-tetrahydrodipicolinate from L-aspartate: step 3/4. Its function is as follows. Catalyzes the condensation of (S)-aspartate-beta-semialdehyde [(S)-ASA] and pyruvate to 4-hydroxy-tetrahydrodipicolinate (HTPA). In Herminiimonas arsenicoxydans, this protein is 4-hydroxy-tetrahydrodipicolinate synthase.